Consider the following 157-residue polypeptide: Glutathione peroxidase homolog BsaA (157 aa).

Residue C35 is part of the active site.

It belongs to the glutathione peroxidase family.

This Halalkalibacterium halodurans (strain ATCC BAA-125 / DSM 18197 / FERM 7344 / JCM 9153 / C-125) (Bacillus halodurans) protein is Glutathione peroxidase homolog BsaA (bsaA).